Here is a 400-residue protein sequence, read N- to C-terminus: Leukosialin (400 aa).

Positions 1 to 19 are cleaved as a signal peptide; it reads MATLLLLLGVLVVSPDALG. At 20–253 the chain is on the extracellular side; that stretch reads STTAVQTPTS…PFRNPDENSR (234 aa). O-linked (GalNAc...) threonine glycans are attached at residues T21, T22, T26, and T28. 2 stretches are compositionally biased toward polar residues: residues 21–51 and 58–112; these read TTAVQTPTSGEPLVSTSEPLSSKMYTTSITS and TGDQ…TPHA. Positions 21-224 are disordered; sequence TTAVQTPTSG…SSGASGPQVS (204 aa). S29 and S35 each carry an O-linked (GalNAc...) serine glycan. T36 is a glycosylation site (O-linked (GalNAc...) threonine). S37, S41, and S42 each carry an O-linked (GalNAc...) serine glycan. T46 and T47 each carry an O-linked (GalNAc...) threonine glycan. A glycan (O-linked (GalNAc...) serine) is linked at S48. Residues T50, T58, and T69 are each glycosylated (O-linked (GalNAc...) threonine). S99 and S103 each carry an O-linked (GalNAc...) serine glycan. O-linked (GalNAc...) threonine glycans are attached at residues T109 and T113. O-linked (GalNAc...) serine glycosylation occurs at S114. Polar residues-rich tracts occupy residues 121–164 and 172–182; these read TANS…SRGT and ATVSLETSKGT. Residues T136, T137, T173, and T178 are each glycosylated (O-linked (GalNAc...) threonine). A compositionally biased stretch (low complexity) spans 196 to 211; it reads TSTGTTGPPVTMTTGS. Residues 212 to 224 show a composition bias toward polar residues; that stretch reads LEPSSGASGPQVS. The N-linked (GlcNAc...) asparagine glycan is linked to N239. A helical membrane pass occupies residues 254-276; that stretch reads GMLPVAVLVALLAVIVLVALLLL. The Cytoplasmic segment spans residues 277 to 400; sequence WRRRQKRRTG…EPEGGDGAAP (124 aa). The required for interaction with EZR, MSN and RDX and for co-localization to microvilli stretch occupies residues 278–308; the sequence is RRRQKRRTGALVLSRGGKRNGVVDAWAGPAQ. Residues 282–296 carry the Nuclear localization signal motif; sequence KRRTGALVLSRGGKR. S291 carries the post-translational modification Phosphoserine. A compositionally biased stretch (gly residues) spans 320-332; sequence GGSGGDKGSGFPD. The interval 320–400 is disordered; it reads GGSGGDKGSG…EPEGGDGAAP (81 aa). S336 carries the phosphoserine modification. T341 carries the phosphothreonine modification. Position 351 is a phosphoserine (S351). The residue at position 355 (S355) is a Phosphoserine; by PKC/PRKCQ. A phosphoserine mark is found at S368 and S379.

Interacts with SIGLEC1. As to quaternary structure, monomer. Interacts with CTNNB1. Interacts with RDX (via FERM domain), EZR and MSN. Post-translationally, glycosylated; has a high content of sialic acid and O-linked carbohydrate structures. In terms of processing, phosphorylation at Ser-355 is regulated by chemokines, requires its association with ERM proteins (EZR, RDX and MSN) and is essential for its function in the regulation of T-cell trafficking to lymph nodes. Has a high content of sialic acid and O-linked carbohydrate structures. Post-translationally, cleavage by CTSG releases its extracellular domain and triggers its intramembrane proteolysis by gamma-secretase releasing the CD43 cytoplasmic tail chain (CD43-ct) which translocates to the nucleus. In terms of processing, sumoylated. Cell surface of thymocytes, T-lymphocytes, neutrophils, plasma cells and myelomas.

The protein localises to the membrane. The protein resides in the cell projection. It localises to the microvillus. It is found in the uropodium. Its subcellular location is the nucleus. The protein localises to the PML body. Its function is as follows. Predominant cell surface sialoprotein of leukocytes which regulates multiple T-cell functions, including T-cell activation, proliferation, differentiation, trafficking and migration. Positively regulates T-cell trafficking to lymph-nodes via its association with ERM proteins (EZR, RDX and MSN). Negatively regulates Th2 cell differentiation and predisposes the differentiation of T-cells towards a Th1 lineage commitment. Promotes the expression of IFN-gamma by T-cells during T-cell receptor (TCR) activation of naive cells and induces the expression of IFN-gamma by CD4(+) T-cells and to a lesser extent by CD8(+) T-cells. Plays a role in preparing T-cells for cytokine sensing and differentiation into effector cells by inducing the expression of cytokine receptors IFNGR and IL4R, promoting IFNGR and IL4R signaling and by mediating the clustering of IFNGR with TCR. Acts as a major E-selectin ligand responsible for Th17 cell rolling on activated vasculature and recruitment during inflammation. Mediates Th17 cells, but not Th1 cells, adhesion to E-selectin. Acts as a T-cell counter-receptor for SIGLEC1. Protects cells from apoptotic signals, promoting cell survival. This Homo sapiens (Human) protein is Leukosialin (SPN).